A 274-amino-acid chain; its full sequence is Formamidopyrimidine-DNA glycosylase (274 aa).

P2 acts as the Schiff-base intermediate with DNA in catalysis. E3 functions as the Proton donor in the catalytic mechanism. The Proton donor; for beta-elimination activity role is filled by K58. 3 residues coordinate DNA: H91, R110, and K152. The FPG-type zinc finger occupies 237–271 (KVYGRKNLPCLVCENKIETVVIAGRHSAFCPHCQP). The Proton donor; for delta-elimination activity role is filled by R261.

The protein belongs to the FPG family. Monomer. Zn(2+) is required as a cofactor.

The enzyme catalyses Hydrolysis of DNA containing ring-opened 7-methylguanine residues, releasing 2,6-diamino-4-hydroxy-5-(N-methyl)formamidopyrimidine.. It carries out the reaction 2'-deoxyribonucleotide-(2'-deoxyribose 5'-phosphate)-2'-deoxyribonucleotide-DNA = a 3'-end 2'-deoxyribonucleotide-(2,3-dehydro-2,3-deoxyribose 5'-phosphate)-DNA + a 5'-end 5'-phospho-2'-deoxyribonucleoside-DNA + H(+). In terms of biological role, involved in base excision repair of DNA damaged by oxidation or by mutagenic agents. Acts as a DNA glycosylase that recognizes and removes damaged bases. Has a preference for oxidized purines, such as 7,8-dihydro-8-oxoguanine (8-oxoG). Has AP (apurinic/apyrimidinic) lyase activity and introduces nicks in the DNA strand. Cleaves the DNA backbone by beta-delta elimination to generate a single-strand break at the site of the removed base with both 3'- and 5'-phosphates. This chain is Formamidopyrimidine-DNA glycosylase, found in Legionella pneumophila (strain Lens).